A 642-amino-acid polypeptide reads, in one-letter code: Probable Xaa-Pro aminopeptidase P (642 aa).

Mn(2+) contacts are provided by Asp439, Asp450, Glu548, and Glu562.

The protein belongs to the peptidase M24B family. Mn(2+) is required as a cofactor.

The enzyme catalyses Release of any N-terminal amino acid, including proline, that is linked to proline, even from a dipeptide or tripeptide.. Catalyzes the removal of a penultimate prolyl residue from the N-termini of peptides. This chain is Probable Xaa-Pro aminopeptidase P (AMPP), found in Laccaria bicolor (strain S238N-H82 / ATCC MYA-4686) (Bicoloured deceiver).